A 172-amino-acid chain; its full sequence is ATP synthase subunit b (172 aa).

The chain crosses the membrane as a helical span at residues 17 to 37 (IVFSAIVLAIVLPFFWWFVIP).

Belongs to the ATPase B chain family. As to quaternary structure, F-type ATPases have 2 components, F(1) - the catalytic core - and F(0) - the membrane proton channel. F(1) has five subunits: alpha(3), beta(3), gamma(1), delta(1), epsilon(1). F(0) has three main subunits: a(1), b(2) and c(10-14). The alpha and beta chains form an alternating ring which encloses part of the gamma chain. F(1) is attached to F(0) by a central stalk formed by the gamma and epsilon chains, while a peripheral stalk is formed by the delta and b chains.

It localises to the cell membrane. Its function is as follows. F(1)F(0) ATP synthase produces ATP from ADP in the presence of a proton or sodium gradient. F-type ATPases consist of two structural domains, F(1) containing the extramembraneous catalytic core and F(0) containing the membrane proton channel, linked together by a central stalk and a peripheral stalk. During catalysis, ATP synthesis in the catalytic domain of F(1) is coupled via a rotary mechanism of the central stalk subunits to proton translocation. Component of the F(0) channel, it forms part of the peripheral stalk, linking F(1) to F(0). The polypeptide is ATP synthase subunit b (Tropheryma whipplei (strain TW08/27) (Whipple's bacillus)).